The following is a 324-amino-acid chain: Glyoxylate/hydroxypyruvate reductase B (324 aa).

Catalysis depends on residues Arg-237 and Glu-266. His-285 acts as the Proton donor in catalysis.

This sequence belongs to the D-isomer specific 2-hydroxyacid dehydrogenase family. GhrB subfamily. Homodimer.

Its subcellular location is the cytoplasm. It carries out the reaction glycolate + NADP(+) = glyoxylate + NADPH + H(+). It catalyses the reaction (R)-glycerate + NAD(+) = 3-hydroxypyruvate + NADH + H(+). The enzyme catalyses (R)-glycerate + NADP(+) = 3-hydroxypyruvate + NADPH + H(+). Its function is as follows. Catalyzes the NADPH-dependent reduction of glyoxylate and hydroxypyruvate into glycolate and glycerate, respectively. The chain is Glyoxylate/hydroxypyruvate reductase B from Escherichia coli O9:H4 (strain HS).